The following is a 604-amino-acid chain: Elongation factor 4 (604 aa).

The tr-type G domain occupies 7–189; sequence SKIRNFCIIA…SIVHLVPPPS (183 aa). Residues 19–24 and 136–139 contribute to the GTP site; these read DHGKST and NKID.

It belongs to the TRAFAC class translation factor GTPase superfamily. Classic translation factor GTPase family. LepA subfamily.

The protein resides in the cell inner membrane. The catalysed reaction is GTP + H2O = GDP + phosphate + H(+). Required for accurate and efficient protein synthesis under certain stress conditions. May act as a fidelity factor of the translation reaction, by catalyzing a one-codon backward translocation of tRNAs on improperly translocated ribosomes. Back-translocation proceeds from a post-translocation (POST) complex to a pre-translocation (PRE) complex, thus giving elongation factor G a second chance to translocate the tRNAs correctly. Binds to ribosomes in a GTP-dependent manner. The sequence is that of Elongation factor 4 from Synechococcus elongatus (strain ATCC 33912 / PCC 7942 / FACHB-805) (Anacystis nidulans R2).